The chain runs to 623 residues: Xaa-Pro aminopeptidase 1 (623 aa).

R77 is an a peptide binding site. K304 is modified (N6-acetyllysine). H395 is an a peptide binding site. Mn(2+)-binding residues include D415, D426, and H489. Residues H489, H498, and E523 each contribute to the a peptide site. Mn(2+)-binding residues include E523 and E537.

This sequence belongs to the peptidase M24B family. As to quaternary structure, homodimer. The cofactor is Mn(2+). As to expression, expressed in all tissues tested, including pancreas, heart, muscle, kidney, liver, lung and brain. Highest levels in pancreas.

The protein resides in the cytoplasm. It localises to the cytosol. The enzyme catalyses Release of any N-terminal amino acid, including proline, that is linked to proline, even from a dipeptide or tripeptide.. With respect to regulation, inhibited by apstatin and the metal ion chelators EDTA and 1,10-phenanthroline. Partially inhibited by dithiothreitol. Not inhibited by enalaprilat or amastatin. Specifically inhibited by the pseudodipeptide CQ31. Inhibition by CQ31 indirectly activates the CARD8 inflammasome: dipeptide accumulation following PEPD inactivation weaky inhibit dipeptidyl peptidases DDP8 and DPP9, relieving DPP8- and/or DPP9-mediated inhibition of CARD8. Metalloaminopeptidase that catalyzes the removal of a penultimate prolyl residue from the N-termini of peptides, such as Arg-Pro-Pro. Contributes to the degradation of bradykinin. In Homo sapiens (Human), this protein is Xaa-Pro aminopeptidase 1.